The sequence spans 27 residues: Ranatuerin-2Cb (27 aa).

A disulfide bridge links cysteine 20 with cysteine 25.

Expressed by the skin glands.

It is found in the secreted. Its function is as follows. Antibacterial activity against Gram-positive bacterium S.aureus (MIC=40 uM) and Gram-negative bacterium E.coli (MIC=2 uM). Has activity against C.albicans (MIC=46 uM). The protein is Ranatuerin-2Cb of Lithobates clamitans (Green frog).